We begin with the raw amino-acid sequence, 197 residues long: Segregation and condensation protein B (197 aa).

It belongs to the ScpB family. Homodimer. Homodimerization may be required to stabilize the binding of ScpA to the Smc head domains. Component of a cohesin-like complex composed of ScpA, ScpB and the Smc homodimer, in which ScpA and ScpB bind to the head domain of Smc. The presence of the three proteins is required for the association of the complex with DNA.

The protein localises to the cytoplasm. In terms of biological role, participates in chromosomal partition during cell division. May act via the formation of a condensin-like complex containing Smc and ScpA that pull DNA away from mid-cell into both cell halves. The polypeptide is Segregation and condensation protein B (Bacillus licheniformis (strain ATCC 14580 / DSM 13 / JCM 2505 / CCUG 7422 / NBRC 12200 / NCIMB 9375 / NCTC 10341 / NRRL NRS-1264 / Gibson 46)).